A 404-amino-acid chain; its full sequence is Argininosuccinate synthase (404 aa).

Residues 10-18 (AYSGGLDTS) and A37 each bind ATP. L-citrulline is bound by residues Y89 and S94. Position 119 (G119) interacts with ATP. 3 residues coordinate L-aspartate: T121, N125, and D126. Residue N125 coordinates L-citrulline. Positions 129, 178, 187, 263, and 275 each coordinate L-citrulline.

It belongs to the argininosuccinate synthase family. Type 1 subfamily. In terms of assembly, homotetramer.

The protein resides in the cytoplasm. It catalyses the reaction L-citrulline + L-aspartate + ATP = 2-(N(omega)-L-arginino)succinate + AMP + diphosphate + H(+). It participates in amino-acid biosynthesis; L-arginine biosynthesis; L-arginine from L-ornithine and carbamoyl phosphate: step 2/3. This is Argininosuccinate synthase from Photobacterium profundum (strain SS9).